Consider the following 325-residue polypeptide: Phospho-N-acetylmuramoyl-pentapeptide-transferase (325 aa).

The next 10 membrane-spanning stretches (helical) occupy residues 3-23, 48-68, 79-99, 106-126, 136-156, 174-194, 199-219, 223-243, 246-266, and 298-318; these read LMIY…PILI, GTPT…VFVV, AIFA…LKII, LKAY…GFYA, IIVP…PFII, GLAT…SYAT, LAVF…YNAY, VFMG…VAMM, LPLI…SVIL, and IVSI…LSLI.

The protein belongs to the glycosyltransferase 4 family. MraY subfamily. Mg(2+) serves as cofactor.

The protein resides in the cell membrane. It carries out the reaction UDP-N-acetyl-alpha-D-muramoyl-L-alanyl-gamma-D-glutamyl-meso-2,6-diaminopimeloyl-D-alanyl-D-alanine + di-trans,octa-cis-undecaprenyl phosphate = di-trans,octa-cis-undecaprenyl diphospho-N-acetyl-alpha-D-muramoyl-L-alanyl-D-glutamyl-meso-2,6-diaminopimeloyl-D-alanyl-D-alanine + UMP. The protein operates within cell wall biogenesis; peptidoglycan biosynthesis. Catalyzes the initial step of the lipid cycle reactions in the biosynthesis of the cell wall peptidoglycan: transfers peptidoglycan precursor phospho-MurNAc-pentapeptide from UDP-MurNAc-pentapeptide onto the lipid carrier undecaprenyl phosphate, yielding undecaprenyl-pyrophosphoryl-MurNAc-pentapeptide, known as lipid I. This is Phospho-N-acetylmuramoyl-pentapeptide-transferase from Clostridium novyi (strain NT).